The chain runs to 116 residues: QAPSDKVIPIISQNEVRNPDGSYQWNYETGNGIKADETGTLKKGSKPDEGDFIVAQGSFSYTGPDGTAYQVQYSADDENGFVPQGAHFPTPPPIPPAIQRALDYLATLPPTPEARP.

Pyrrolidone carboxylic acid is present on Gln-1. One can recognise a Chitin-binding type R&amp;R domain in the interval 20-92 (DGSYQWNYET…PQGAHFPTPP (73 aa)). The interval 78–97 (ENGFVPQGAHFPTPPPIPPA) is disordered. An O-linked (GalNAc) threonine; in ADB-4A, ABD-4B and ABD-4C glycan is attached at Thr-90. Residue Thr-107 is glycosylated (O-linked (GalNAc) threonine; in ADB-4A and ABD-4B). An O-linked (GalNAc) threonine; in ADB-4A glycan is attached at Thr-111. At Pro-116 the chain carries Proline amide.

Post-translationally, 3 variants exists that arise from a sequential glycosylation with N-acetylgalactosamine at three (ABD-4A), two (ABD-4B) or one (ABD-4C) threonine residues.

Its function is as follows. Component of the soft endocuticle of migratory locust. This Locusta migratoria (Migratory locust) protein is Endocuticle structural glycoprotein ABD-4.